A 310-amino-acid chain; its full sequence is AT-hook motif nuclear-localized protein 15 (310 aa).

Disordered stretches follow at residues 15 to 112 (VESP…KESP) and 239 to 310 (EEEQ…PPSY). 2 stretches are compositionally biased toward polar residues: residues 31–41 (SNNNNPPTMTR) and 51–67 (TTNNSGSPNTQTQSQEE). Residues 88–100 (RRPRGRPPGSKNK) constitute a DNA-binding region (a.T hook). Over residues 94-104 (PPGSKNKPKSP) the composition is skewed to low complexity. In terms of domain architecture, PPC spans 112–251 (PNSLQSHVLE…QQQEQPLQLE (140 aa)). A compositionally biased stretch (pro residues) spans 301-310 (GPPPRAPPSY).

Its subcellular location is the nucleus. In terms of biological role, transcription factor that specifically binds AT-rich DNA sequences related to the nuclear matrix attachment regions (MARs). Binds the DNA sequence GNFEI (GA-negative feedback element I) in the GA3OX1 promoter. Negatively regulates plant innate immunity (PTI) to pathogens through the down-regulation of the PAMP-triggered FRK1 expression. The chain is AT-hook motif nuclear-localized protein 15 from Arabidopsis thaliana (Mouse-ear cress).